Here is a 327-residue protein sequence, read N- to C-terminus: Phenylalanine--tRNA ligase alpha subunit (327 aa).

Glutamate 252 is a binding site for Mg(2+).

This sequence belongs to the class-II aminoacyl-tRNA synthetase family. Phe-tRNA synthetase alpha subunit type 1 subfamily. In terms of assembly, tetramer of two alpha and two beta subunits. Mg(2+) serves as cofactor.

It is found in the cytoplasm. The enzyme catalyses tRNA(Phe) + L-phenylalanine + ATP = L-phenylalanyl-tRNA(Phe) + AMP + diphosphate + H(+). The sequence is that of Phenylalanine--tRNA ligase alpha subunit from Edwardsiella ictaluri (strain 93-146).